A 473-amino-acid polypeptide reads, in one-letter code: UDP-N-acetylmuramate--L-alanine ligase (473 aa).

112–118 (GTHGKTT) contacts ATP.

Belongs to the MurCDEF family.

The protein resides in the cytoplasm. It catalyses the reaction UDP-N-acetyl-alpha-D-muramate + L-alanine + ATP = UDP-N-acetyl-alpha-D-muramoyl-L-alanine + ADP + phosphate + H(+). Its pathway is cell wall biogenesis; peptidoglycan biosynthesis. Functionally, cell wall formation. In Nitrosomonas europaea (strain ATCC 19718 / CIP 103999 / KCTC 2705 / NBRC 14298), this protein is UDP-N-acetylmuramate--L-alanine ligase.